The sequence spans 134 residues: Z-ring associated protein G (134 aa).

Residues 7-27 (EIWVAIGIAFIVGLFIGYIIV) traverse the membrane as a helical segment. A disordered region spans residues 107-134 (ATDKSQNEQPRDYSEGASGLFKENKEEN). Basic and acidic residues predominate over residues 111–120 (SQNEQPRDYS).

The protein belongs to the ZapG family.

The protein resides in the cell inner membrane. Involved in cell division, cell envelope biogenesis and cell shape maintenance. The chain is Z-ring associated protein G from Haemophilus influenzae (strain ATCC 51907 / DSM 11121 / KW20 / Rd).